Consider the following 161-residue polypeptide: Nucleotide-binding protein Bphyt_3208 (161 aa).

The protein belongs to the YajQ family.

Its function is as follows. Nucleotide-binding protein. The chain is Nucleotide-binding protein Bphyt_3208 from Paraburkholderia phytofirmans (strain DSM 17436 / LMG 22146 / PsJN) (Burkholderia phytofirmans).